The chain runs to 329 residues: MDPSKVKIPPMKDLTVDNITENVIRINSLCQDERLKYVLERLVTHLHDFARETRLSTDEWMTGLRFLTEVGKICSDVRQEYILLSDILGLSILVDSIDHPKPPNSTEGTVLGPFHTHDAEPLTPGASISHDPAGEPLLVVCTVKDTHGNPVSDVKIDIWETDSTGHYDVQYAGRDGPDGRCIMTSDKEGVFWFKAITPVPYPIPHDGPVGKLLKLLGRHPYRPSHMHFMFEKGGFDHLITALYLRNDPYETSDAVFGVKDSLVVDIGKAGPEYAAKYGVSEDHALLTYDFVLVSDEETSELRARNSKEALDKLGRKVKIVNGLPVPDLD.

The Fe cation site is built by tyrosine 167, tyrosine 201, histidine 225, and histidine 227.

This sequence belongs to the intradiol ring-cleavage dioxygenase family. As to quaternary structure, homodimer. Fe(3+) is required as a cofactor.

It catalyses the reaction catechol + O2 = cis,cis-muconate + 2 H(+). It carries out the reaction benzene-1,2,4-triol + O2 = maleylacetate + 2 H(+). Functionally, intradiol ring-cleavage dioxygenase involved in an alternative pathway to the protocatechuic acid pathway since it is active on hydroxyquinol and catechol but not on protocatechuic acid. This chain is Intradiol ring-cleavage dioxygenase hqdA, found in Aspergillus niger (strain ATCC MYA-4892 / CBS 513.88 / FGSC A1513).